A 361-amino-acid polypeptide reads, in one-letter code: Peptide chain release factor 1 (361 aa).

Position 237 is an N5-methylglutamine (Q237).

Belongs to the prokaryotic/mitochondrial release factor family. Methylated by PrmC. Methylation increases the termination efficiency of RF1.

Its subcellular location is the cytoplasm. Its function is as follows. Peptide chain release factor 1 directs the termination of translation in response to the peptide chain termination codons UAG and UAA. The protein is Peptide chain release factor 1 of Chromohalobacter salexigens (strain ATCC BAA-138 / DSM 3043 / CIP 106854 / NCIMB 13768 / 1H11).